A 257-amino-acid polypeptide reads, in one-letter code: Beta-fibrinogenase mucrofibrase-4 (257 aa).

The N-terminal stretch at 1 to 18 (MVLIRVLANLLILQLSYA) is a signal peptide. The propeptide occupies 19 to 24 (QKSSEL). The Peptidase S1 domain occupies 25-248 (VIGGDECNIN…HLDWIKGFIA (224 aa)). 6 disulfide bridges follow: C31–C162, C49–C65, C97–C255, C141–C209, C173–C188, and C199–C224. Active-site charge relay system residues include H64 and D109. S203 (charge relay system) is an active-site residue.

Belongs to the peptidase S1 family. Snake venom subfamily. As to quaternary structure, monomer. As to expression, expressed by the venom gland.

The protein localises to the secreted. In terms of biological role, snake venom serine protease with fibrinogenolytic activities. Cleaves beta-chain of fibrinogen (FGB) efficiently and shows relatively lower activity on alpha-chain. In Protobothrops mucrosquamatus (Taiwan habu), this protein is Beta-fibrinogenase mucrofibrase-4.